A 309-amino-acid polypeptide reads, in one-letter code: Low density lipoprotein receptor adapter protein 1-A (309 aa).

The region spanning 41-195 is the PID domain; sequence LLEGMLFHLK…SGGEGASSSQ (155 aa). Residues 179–199 are disordered; that stretch reads EKREKSGSGGEGASSSQSDGS. Residues 213 to 217 carry the Clathrin box motif; the sequence is LLDLE. Residues 250 to 277 form an AP-2 complex binding region; sequence WELDDGLDEAFARLAESRTNPQVLDIGL. Positions 258–267 match the [DE]-X(1,2)-F-X-X-[FL]-X-X-X-R motif motif; that stretch reads EAFARLAESR.

As to quaternary structure, interacts (via PID domain) with ldlr (via NPXY motif). Binds to soluble clathrin trimers and to the adapter protein complex 2 (AP-2, beta 2 subunit). Binds to phosphoinositides, which regulate clathrin bud assembly at the cell surface. Interacts with the VLDL receptor (vldlr). Interacts with the vitellogenin receptor. As to expression, expressed at high level during oogenesis and embryogenesis. Found in the oocyte vegetal cortex. Found at low level in the adult liver and spleen. Found at very low level in testis and heart.

The protein resides in the cytoplasm. Functionally, adapter protein (clathrin-associated sorting protein (CLASP)) required for efficient endocytosis of the LDL receptor (LDLR). Also involved in the vitellogenin receptor mediated endocytosis of nutrients during oogenesis. This is Low density lipoprotein receptor adapter protein 1-A from Xenopus laevis (African clawed frog).